Here is a 514-residue protein sequence, read N- to C-terminus: Maturase K (514 aa).

The protein belongs to the intron maturase 2 family. MatK subfamily.

It localises to the plastid. The protein localises to the chloroplast. Usually encoded in the trnK tRNA gene intron. Probably assists in splicing its own and other chloroplast group II introns. This is Maturase K from Zamia integrifolia (Coontie).